The sequence spans 342 residues: S-adenosylmethionine:tRNA ribosyltransferase-isomerase (342 aa).

It belongs to the QueA family. As to quaternary structure, monomer.

The protein localises to the cytoplasm. The enzyme catalyses 7-aminomethyl-7-carbaguanosine(34) in tRNA + S-adenosyl-L-methionine = epoxyqueuosine(34) in tRNA + adenine + L-methionine + 2 H(+). The protein operates within tRNA modification; tRNA-queuosine biosynthesis. In terms of biological role, transfers and isomerizes the ribose moiety from AdoMet to the 7-aminomethyl group of 7-deazaguanine (preQ1-tRNA) to give epoxyqueuosine (oQ-tRNA). In Listeria innocua serovar 6a (strain ATCC BAA-680 / CLIP 11262), this protein is S-adenosylmethionine:tRNA ribosyltransferase-isomerase.